Consider the following 688-residue polypeptide: Elongation factor G (688 aa).

The region spanning Glu-8–Leu-282 is the tr-type G domain. Residues Ala-17 to Thr-24, Asp-81 to His-85, and Asn-135 to Asp-138 each bind GTP.

The protein belongs to the TRAFAC class translation factor GTPase superfamily. Classic translation factor GTPase family. EF-G/EF-2 subfamily.

The protein resides in the cytoplasm. In terms of biological role, catalyzes the GTP-dependent ribosomal translocation step during translation elongation. During this step, the ribosome changes from the pre-translocational (PRE) to the post-translocational (POST) state as the newly formed A-site-bound peptidyl-tRNA and P-site-bound deacylated tRNA move to the P and E sites, respectively. Catalyzes the coordinated movement of the two tRNA molecules, the mRNA and conformational changes in the ribosome. The chain is Elongation factor G from Clostridium perfringens (strain 13 / Type A).